We begin with the raw amino-acid sequence, 254 residues long: Thiazole synthase (254 aa).

K95 functions as the Schiff-base intermediate with DXP in the catalytic mechanism. 1-deoxy-D-xylulose 5-phosphate is bound by residues G156, 182 to 183, and 204 to 205; these read AG and NT.

This sequence belongs to the ThiG family. In terms of assembly, homotetramer. Forms heterodimers with either ThiH or ThiS.

The protein localises to the cytoplasm. The catalysed reaction is [ThiS sulfur-carrier protein]-C-terminal-Gly-aminoethanethioate + 2-iminoacetate + 1-deoxy-D-xylulose 5-phosphate = [ThiS sulfur-carrier protein]-C-terminal Gly-Gly + 2-[(2R,5Z)-2-carboxy-4-methylthiazol-5(2H)-ylidene]ethyl phosphate + 2 H2O + H(+). The protein operates within cofactor biosynthesis; thiamine diphosphate biosynthesis. In terms of biological role, catalyzes the rearrangement of 1-deoxy-D-xylulose 5-phosphate (DXP) to produce the thiazole phosphate moiety of thiamine. Sulfur is provided by the thiocarboxylate moiety of the carrier protein ThiS. In vitro, sulfur can be provided by H(2)S. The chain is Thiazole synthase from Shewanella sp. (strain MR-7).